Reading from the N-terminus, the 1304-residue chain is Angiotensin-converting enzyme (1304 aa).

A signal peptide spans 1–27 (MGAASGRRGPGLLLPLLLLLPPQPALA). At 28-1257 (LDPGLQPGNF…LDAQQARVGQ (1230 aa)) the chain is on the extracellular side. 6 N-linked (GlcNAc...) asparagine glycosylation sites follow: N36, N52, N72, N109, N144, and N158. Peptidase M2 domains lie at 38-622 (SADE…LGWP) and 641-1220 (VTDE…LGWP). C155 and C163 are oxidised to a cystine. Chloride is bound at residue Y229. The N-linked (GlcNAc...) asparagine glycan is linked to N316. A disulfide bridge connects residues C357 and C375. A Zn(2+)-binding site is contributed by H388. The Proton acceptor 1 role is filled by E389. Zn(2+) is bound by residues H392 and E416. N-linked (GlcNAc...) asparagine glycosylation is found at N440, N443, and N507. H518 (proton donor 1) is an active-site residue. R527 contacts chloride. A disulfide bond links C543 and C555. N675 is a glycosylation site (N-linked (GlcNAc...) asparagine). N-linked (GlcNAc...) (complex) asparagine glycosylation is found at N693 and N712. A disulfide bridge links C755 with C761. N758 carries N-linked (GlcNAc...) asparagine glycosylation. Residues R789 and Y827 each coordinate chloride. Residue N940 is glycosylated (N-linked (GlcNAc...) asparagine). C955 and C973 are oxidised to a cystine. Position 986 (H986) interacts with Zn(2+). E987 functions as the Proton acceptor 2 in the catalytic mechanism. Positions 990 and 1014 each coordinate Zn(2+). Residues W1088 and R1092 each coordinate chloride. The active-site Proton donor 2 is the H1116. R1125 is a binding site for chloride. Residues C1141 and C1153 are joined by a disulfide bond. A glycan (N-linked (GlcNAc...) asparagine) is linked at N1189. The segment at 1213 to 1254 (HGEKLGWPQYNWTPNSARSEGPLPDSGRVSFLGLDLDAQQAR) is juxtamembrane stalk. A helical transmembrane segment spans residues 1258-1274 (WLLLFLGIALLVATLGL). The Cytoplasmic portion of the chain corresponds to 1275-1304 (SQRLFSIRHRSLHRHSHGPQFDSEVELRHS). S1297 carries the phosphoserine modification.

The protein belongs to the peptidase M2 family. Monomer and homodimer; homodimerizes following binding to an inhibitor. Interacts with calmodulin (CALM1, CALM2 or CALM3); interaction takes place in the cytoplasmic region and regulates phosphorylation and proteolytic cleavage. The cofactor is Zn(2+). Chloride serves as cofactor. Post-translationally, produced following proteolytic cleavage by secretase enzymes that cleave the transmembrane form in the juxtamembrane stalk region upstream of the transmembrane region. Cleavage can take place at different sites of the juxtamembrane stalk region. Phosphorylated by CK2 on Ser-1297; which allows membrane retention. Phosphorylated on tyrosine residues on its extracellular part, promoting cleavage by secretase enzymes and formation of the soluble form (Angiotensin-converting enzyme, soluble form).

The protein resides in the cell membrane. The protein localises to the cytoplasm. It is found in the secreted. It carries out the reaction Release of a C-terminal dipeptide, oligopeptide-|-Xaa-Yaa, when Xaa is not Pro, and Yaa is neither Asp nor Glu. Thus, conversion of angiotensin I to angiotensin II, with increase in vasoconstrictor activity, but no action on angiotensin II.. It catalyses the reaction angiotensin I + H2O = L-histidyl-L-leucine + angiotensin II. The enzyme catalyses bradykinin + H2O = L-Phe-L-Arg + bradykinin(1-7). The catalysed reaction is substance P + H2O = substance P(1-9) + L-Leu-L-Met-NH2. It carries out the reaction substance P + H2O = substance P(1-8) + Gly-L-Leu-L-Met-NH2. It catalyses the reaction substance P + H2O = L-Phe-L-Phe-Gly-L-Leu-L-Met-NH2 + substance P(1-6). The enzyme catalyses neurotensin + H2O = neurotensin(1-11) + L-isoleucyl-L-leucine. The catalysed reaction is goralatide + H2O = N-acetyl-L-seryl-L-aspartate + L-lysyl-L-proline. It carries out the reaction Met-enkephalin + H2O = L-phenylalanyl-L-methionine + L-tyrosylglycylglycine. It catalyses the reaction Leu-enkephalin + H2O = L-tyrosylglycylglycine + L-phenylalanyl-L-leucine. The enzyme catalyses Met-enkephalin-Arg-Phe + H2O = L-arginyl-L-phenylalanine + Met-enkephalin. With respect to regulation, the dipeptidyl carboxypeptidase activity is strongly activated by chloride. The dipeptidyl carboxypeptidase activity is specifically inhibited by lisinopril, captopril and enalaprilat. Its activity is regulated as follows. Strongly inhibited by lisinopril and captopril. In terms of biological role, dipeptidyl carboxypeptidase that removes dipeptides from the C-terminus of a variety of circulating hormones, such as angiotensin I, bradykinin or enkephalins, thereby playing a key role in the regulation of blood pressure, electrolyte homeostasis or synaptic plasticity. Composed of two similar catalytic domains, each possessing a functional active site, with different selectivity for substrates. Plays a major role in the angiotensin-renin system that regulates blood pressure and sodium retention by the kidney by converting angiotensin I to angiotensin II, resulting in an increase of the vasoconstrictor activity of angiotensin. Also able to inactivate bradykinin, a potent vasodilator, and therefore enhance the blood pressure response. Acts as a regulator of synaptic transmission by mediating cleavage of neuropeptide hormones, such as substance P, neurotensin or enkephalins. Catalyzes degradation of different enkephalin neuropeptides (Met-enkephalin, Leu-enkephalin, Met-enkephalin-Arg-Phe and possibly Met-enkephalin-Arg-Gly-Leu). Acts as a regulator of synaptic plasticity in the nucleus accumbens of the brain by mediating cleavage of Met-enkephalin-Arg-Phe, a strong ligand of Mu-type opioid receptor OPRM1, into Met-enkephalin. Met-enkephalin-Arg-Phe cleavage by ACE decreases activation of OPRM1, leading to long-term synaptic potentiation of glutamate release. Also acts as a regulator of hematopoietic stem cell differentiation by mediating degradation of hemoregulatory peptide N-acetyl-SDKP (AcSDKP). Acts as a regulator of cannabinoid signaling pathway by mediating degradation of hemopressin, an antagonist peptide of the cannabinoid receptor CNR1. Involved in amyloid-beta metabolism by catalyzing degradation of Amyloid-beta protein 40 and Amyloid-beta protein 42 peptides, thereby preventing plaque formation. Catalyzes cleavage of cholecystokinin (maturation of Cholecystokinin-8 and Cholecystokinin-5) and Gonadoliberin-1 (both maturation and degradation) hormones. Degradation of hemoregulatory peptide N-acetyl-SDKP (AcSDKP) and amyloid-beta proteins is mediated by the N-terminal catalytic domain, while angiotensin I and cholecystokinin cleavage is mediated by the C-terminal catalytic region. Soluble form that is released in blood plasma and other body fluids following proteolytic cleavage in the juxtamembrane stalk region. Its function is as follows. Isoform produced by alternative promoter usage that is specifically expressed in spermatocytes and adult testis, and which is required for male fertility. In contrast to somatic isoforms, only contains one catalytic domain. Acts as a dipeptidyl carboxypeptidase that removes dipeptides from the C-terminus of substrates. The identity of substrates that are needed for male fertility is unknown. May also have a glycosidase activity which releases GPI-anchored proteins from the membrane by cleaving the mannose linkage in the GPI moiety. The GPIase activity was reported to be essential for the egg-binding ability of the sperm. This activity is however unclear and has been challenged by other groups, suggesting that it may be indirect. In Pan troglodytes (Chimpanzee), this protein is Angiotensin-converting enzyme.